Here is a 234-residue protein sequence, read N- to C-terminus: Carboxy-S-adenosyl-L-methionine synthase (234 aa).

S-adenosyl-L-methionine contacts are provided by residues Tyr35, 60–62 (GCS), 109–110 (DI), Asn124, and Arg191.

This sequence belongs to the class I-like SAM-binding methyltransferase superfamily. Cx-SAM synthase family. Homodimer.

The enzyme catalyses prephenate + S-adenosyl-L-methionine = carboxy-S-adenosyl-L-methionine + 3-phenylpyruvate + H2O. Catalyzes the conversion of S-adenosyl-L-methionine (SAM) to carboxy-S-adenosyl-L-methionine (Cx-SAM). The chain is Carboxy-S-adenosyl-L-methionine synthase from Campylobacter fetus subsp. fetus (strain 82-40).